We begin with the raw amino-acid sequence, 239 residues long: Ribosomal RNA small subunit methyltransferase G (239 aa).

S-adenosyl-L-methionine is bound by residues Gly78, Phe83, 129–130, and Arg148; that span reads AE.

It belongs to the methyltransferase superfamily. RNA methyltransferase RsmG family.

Its subcellular location is the cytoplasm. Specifically methylates the N7 position of a guanine in 16S rRNA. The polypeptide is Ribosomal RNA small subunit methyltransferase G (Clostridium botulinum (strain Loch Maree / Type A3)).